We begin with the raw amino-acid sequence, 280 residues long: Shikimate dehydrogenase (NADP(+)) (280 aa).

Residues 18-20 and threonine 65 contribute to the shikimate site; that span reads SRS. Lysine 69 acts as the Proton acceptor in catalysis. Shikimate contacts are provided by asparagine 90 and aspartate 105. Residues 130–134, 154–159, and leucine 219 contribute to the NADP(+) site; these read GAGGA and NRTLAR. Shikimate is bound at residue tyrosine 221. Glycine 242 provides a ligand contact to NADP(+).

It belongs to the shikimate dehydrogenase family. As to quaternary structure, homodimer.

The catalysed reaction is shikimate + NADP(+) = 3-dehydroshikimate + NADPH + H(+). It participates in metabolic intermediate biosynthesis; chorismate biosynthesis; chorismate from D-erythrose 4-phosphate and phosphoenolpyruvate: step 4/7. Its function is as follows. Involved in the biosynthesis of the chorismate, which leads to the biosynthesis of aromatic amino acids. Catalyzes the reversible NADPH linked reduction of 3-dehydroshikimate (DHSA) to yield shikimate (SA). This is Shikimate dehydrogenase (NADP(+)) from Mesorhizobium japonicum (strain LMG 29417 / CECT 9101 / MAFF 303099) (Mesorhizobium loti (strain MAFF 303099)).